Consider the following 456-residue polypeptide: Anthocyanidin 3-O-galactosyltransferase F3GT1 (456 aa).

Residues S20, H22, and Q83 each contribute to the an anthocyanidin site. The Proton acceptor role is filled by H22. The active-site Charge relay is D118. H150 is a binding site for an anthocyanidin. Positions 281, 333, 334, 351, 355, 356, and 359 each coordinate UDP. G374 lines the an anthocyanidin pocket.

This sequence belongs to the UDP-glycosyltransferase family. Expressed at low levels in stems and leaves. Expressed in ovaries.

The catalysed reaction is cyanidin + UDP-alpha-D-galactose = cyanidin 3-O-beta-D-galactoside + UDP + H(+). The protein operates within pigment biosynthesis; anthocyanin biosynthesis. In terms of biological role, involved in anthocyanin biosynthesis by catalyzing the galactosylation of cyanidin. Required for the accumulation of anthocyanin in red-fleshed kiwifruit varieties. Seems to be the key enzyme regulating the accumulation of anthocyanin in red-fleshed kiwi fruits. This Actinidia chinensis var. chinensis (Chinese soft-hair kiwi) protein is Anthocyanidin 3-O-galactosyltransferase F3GT1.